Consider the following 398-residue polypeptide: Phosphoglycerate kinase (398 aa).

Substrate-binding positions include 20–22, Arg35, 58–61, Arg118, and Arg155; these read DLN and HLGR. ATP contacts are provided by residues Lys206, Gly295, Glu326, and 354–357; that span reads GGDS.

Belongs to the phosphoglycerate kinase family. Monomer.

It localises to the cytoplasm. The catalysed reaction is (2R)-3-phosphoglycerate + ATP = (2R)-3-phospho-glyceroyl phosphate + ADP. It functions in the pathway carbohydrate degradation; glycolysis; pyruvate from D-glyceraldehyde 3-phosphate: step 2/5. The polypeptide is Phosphoglycerate kinase (Onion yellows phytoplasma (strain OY-M)).